A 120-amino-acid polypeptide reads, in one-letter code: NAD(P)H-quinone oxidoreductase subunit 3, chloroplastic (120 aa).

A run of 3 helical transmembrane segments spans residues Tyr-7–Leu-27, Met-64–Met-84, and Phe-89–Val-109.

Belongs to the complex I subunit 3 family. As to quaternary structure, NDH is composed of at least 16 different subunits, 5 of which are encoded in the nucleus.

It is found in the plastid. It localises to the chloroplast thylakoid membrane. The enzyme catalyses a plastoquinone + NADH + (n+1) H(+)(in) = a plastoquinol + NAD(+) + n H(+)(out). The catalysed reaction is a plastoquinone + NADPH + (n+1) H(+)(in) = a plastoquinol + NADP(+) + n H(+)(out). In terms of biological role, NDH shuttles electrons from NAD(P)H:plastoquinone, via FMN and iron-sulfur (Fe-S) centers, to quinones in the photosynthetic chain and possibly in a chloroplast respiratory chain. The immediate electron acceptor for the enzyme in this species is believed to be plastoquinone. Couples the redox reaction to proton translocation, and thus conserves the redox energy in a proton gradient. The chain is NAD(P)H-quinone oxidoreductase subunit 3, chloroplastic from Marchantia polymorpha (Common liverwort).